The following is a 250-amino-acid chain: Heat stress transcription factor C-1b (250 aa).

Residues 129–182 are a coiled coil; it reads EEGEEVRGTIEAVQRLREEQRGMEEELQAMDQRLRAAESRPGQMMAFLAKLADE. The hydrophobic repeat HR-A/B stretch occupies residues 144–180; sequence LREEQRGMEEELQAMDQRLRAAESRPGQMMAFLAKLA. A disordered region spans residues 199 to 226; it reads AAGNNGSDPCKRRRIGADTGRGGVATGG. The Nuclear localization signal signature appears at 209-212; the sequence is KRRR.

Belongs to the HSF family. Class C subfamily. In terms of assembly, homotrimer. In terms of processing, exhibits temperature-dependent phosphorylation.

The protein resides in the nucleus. Transcriptional regulator that specifically binds DNA of heat shock promoter elements (HSE). The chain is Heat stress transcription factor C-1b (HSFC1B) from Oryza sativa subsp. japonica (Rice).